Consider the following 288-residue polypeptide: Glycine--tRNA ligase alpha subunit (288 aa).

This sequence belongs to the class-II aminoacyl-tRNA synthetase family. In terms of assembly, tetramer of two alpha and two beta subunits.

The protein resides in the cytoplasm. It carries out the reaction tRNA(Gly) + glycine + ATP = glycyl-tRNA(Gly) + AMP + diphosphate. This Rickettsia rickettsii (strain Iowa) protein is Glycine--tRNA ligase alpha subunit.